Here is a 356-residue protein sequence, read N- to C-terminus: UDP-N-acetylglucosamine--N-acetylmuramyl-(pentapeptide) pyrophosphoryl-undecaprenol N-acetylglucosamine transferase (356 aa).

UDP-N-acetyl-alpha-D-glucosamine-binding positions include 11 to 13, asparagine 122, serine 186, and glutamine 287; that span reads TGG.

Belongs to the glycosyltransferase 28 family. MurG subfamily.

The protein localises to the cell inner membrane. The enzyme catalyses di-trans,octa-cis-undecaprenyl diphospho-N-acetyl-alpha-D-muramoyl-L-alanyl-D-glutamyl-meso-2,6-diaminopimeloyl-D-alanyl-D-alanine + UDP-N-acetyl-alpha-D-glucosamine = di-trans,octa-cis-undecaprenyl diphospho-[N-acetyl-alpha-D-glucosaminyl-(1-&gt;4)]-N-acetyl-alpha-D-muramoyl-L-alanyl-D-glutamyl-meso-2,6-diaminopimeloyl-D-alanyl-D-alanine + UDP + H(+). It participates in cell wall biogenesis; peptidoglycan biosynthesis. In terms of biological role, cell wall formation. Catalyzes the transfer of a GlcNAc subunit on undecaprenyl-pyrophosphoryl-MurNAc-pentapeptide (lipid intermediate I) to form undecaprenyl-pyrophosphoryl-MurNAc-(pentapeptide)GlcNAc (lipid intermediate II). In Anaplasma marginale (strain St. Maries), this protein is UDP-N-acetylglucosamine--N-acetylmuramyl-(pentapeptide) pyrophosphoryl-undecaprenol N-acetylglucosamine transferase.